A 513-amino-acid polypeptide reads, in one-letter code: E3 ubiquitin-protein ligase XBAT33 (513 aa).

ANK repeat units follow at residues 44–73 (GLNS…DVNS), 77–106 (CGQT…NVTR), 111–140 (AGRT…PSDK), 171–200 (GGIT…NVSA), and 214–244 (AGST…KMTL). The segment at 312–362 (CAVCLERTCTVAAEGCEHQLCVRCALYLCSSSNVPSVTVGPPGSIPCPLCR) adopts an RING-type zinc-finger fold. 2 disordered regions span residues 397 to 417 (DTTD…SKTR) and 455 to 483 (HGTE…EEGQ). Composition is skewed to basic and acidic residues over residues 455–466 (HGTERHSEEHVE) and 474–483 (TEQEKIEEGQ).

It catalyses the reaction S-ubiquitinyl-[E2 ubiquitin-conjugating enzyme]-L-cysteine + [acceptor protein]-L-lysine = [E2 ubiquitin-conjugating enzyme]-L-cysteine + N(6)-ubiquitinyl-[acceptor protein]-L-lysine.. Its pathway is protein modification; protein ubiquitination. Possesses E3 ubiquitin-protein ligase activity when associated with the E2 enzyme UBC8 in vitro. This Arabidopsis thaliana (Mouse-ear cress) protein is E3 ubiquitin-protein ligase XBAT33 (XBAT33).